We begin with the raw amino-acid sequence, 264 residues long: Apolipoprotein A-I (264 aa).

An N-terminal signal peptide occupies residues 1–18 (MKAVLLVVAALFLAGSQA). A run of 2 repeats spans residues 67–88 (LRLS…ADFG) and 89–110 (LATQ…QIVS). Positions 67–264 (LRLSDNWDTL…DQASKQLAAQ (198 aa)) are 10 X approximate tandem repeats. The stretch at 111–121 (EDLQDVKHKVQ) is one 3; half-length repeat. 3 tandem repeats follow at residues 122 to 143 (PYLE…EKVR), 144 to 165 (PLGI…EKLT), and 166 to 187 (PLGE…TQLA). One copy of the 7; truncated repeat lies at 188-207 (PFSEEMRQRLAKRLEELKDS). Met193 is subject to Methionine sulfoxide. Repeat unit 8 spans residues 208–229 (ATLADYHAKASEHLKMLGEKAK). Residues 230-240 (PALEDLRQGLL) form a 9; half-length repeat. Repeat unit 10 spans residues 241-264 (PVLENLKASILSSIDQASKQLAAQ).

Belongs to the apolipoprotein A1/A4/E family. In terms of assembly, homodimer. Interacts with APOA1BP and CLU. Component of a sperm activating protein complex (SPAP), consisting of APOA1, an immunoglobulin heavy chain, an immunoglobulin light chain and albumin. Interacts with NDRG1. Interacts with SCGB3A2. Interacts with NAXE and YJEFN3. Post-translationally, glycosylated. In terms of processing, palmitoylated. Phosphorylation sites are present in the extracellular medium.

The protein localises to the secreted. Its function is as follows. Participates in the reverse transport of cholesterol from tissues to the liver for excretion by promoting cholesterol efflux from tissues and by acting as a cofactor for the lecithin cholesterol acyltransferase (LCAT). As part of the SPAP complex, activates spermatozoa motility. The polypeptide is Apolipoprotein A-I (APOA1) (Cavia aperea (Brazilian guinea pig)).